A 70-amino-acid polypeptide reads, in one-letter code: MFTRAQVRRILQRVPGKQRFGIYRFLPFFFVLGGTMEWIMIKVRVGQETFYDVYRRKASERQYQRRLEDE.

Over 1–19 (MFTRAQVRRILQRVPGKQR) the chain is Mitochondrial matrix. A helical membrane pass occupies residues 20 to 41 (FGIYRFLPFFFVLGGTMEWIMI). Over 42–70 (KVRVGQETFYDVYRRKASERQYQRRLEDE) the chain is Mitochondrial intermembrane.

The protein belongs to the UQCC5 family. As to quaternary structure, associates with the mitochondrial ribosome. Interacts with UQCC6. Interacts with MT-CYB; interacts with newly synthesizes MT-CYB. Forms a complex, named COMB/coordinator of mitochondrial CYTB biogenesis, composed of UQCC1, UQCC2, UQCC4, UQCC5 and UQCC6; regulates MT-CYB synthesis and promotes its membrane insertion.

Its subcellular location is the mitochondrion inner membrane. In terms of biological role, required for the assembly and stability of the mitochondrial ubiquinol-cytochrome c reductase complex (complex III (CIII) or cytochrome b-c1 complex), a multisubunit transmembrane complex that is part of the mitochondrial electron transport chain (ETC) which drives oxidative phosphorylation. Mediates early complex III biogenesis. Participates in regulating the levels of electron transport chain proteins, and therefore energy supply, in response to changes in energy demand. Also involved in the first steps of cytochrome c oxidase complex (complex IV) assembly. The polypeptide is Ubiquinol-cytochrome c reductase complex assembly factor 5 (Homo sapiens (Human)).